Here is a 456-residue protein sequence, read N- to C-terminus: MTOR-associated protein MEAK7 (456 aa).

A lipid anchor (N-myristoyl glycine) is attached at Gly-2. The TLDc domain maps to 244-412 (SILDVLSVMY…FDKMEVWAVG (169 aa)).

In terms of assembly, interacts (via C-terminal domain) with MTOR and MLST8; the interaction with MTOR increases upon nutrient stimulation.

The protein localises to the membrane. It is found in the cytoplasm. Its subcellular location is the lysosome. Functionally, activates an alternative mTOR signaling through RPS6KB2 activation and EIF4EBP1 repression to regulate cell proliferation and migration. Recruits MTOR at the lysosome, essential for MTOR signaling at the lysosome. In Homo sapiens (Human), this protein is MTOR-associated protein MEAK7.